We begin with the raw amino-acid sequence, 336 residues long: Ketoreductase adrE (336 aa).

Residue Tyr-171 coordinates NADP(+).

Belongs to the NAD(P)-dependent epimerase/dehydratase family. Dihydroflavonol-4-reductase subfamily.

The protein operates within secondary metabolite biosynthesis; terpenoid biosynthesis. Its function is as follows. Ketoreductase; part of the gene cluster that mediates the biosynthesis of andrastins, meroterpenoid compounds that exhibit inhibitory activity against ras farnesyltransferase, suggesting that they could be promising leads for antitumor agents. The first step of the pathway is the synthesis of 3,5-dimethylorsellinic acid (DMOA) by the polyketide synthase adrD via condensation of one acetyl-CoA starter unit with 3 malonyl-CoA units and 2 methylations. DMAO is then converted to farnesyl-DMAO by the prenyltransferase adrG. The methyltransferase adrK catalyzes the methylation of the carboxyl group of farnesyl-DMAO to farnesyl-DMAO methyl ester which is further converted to epoxyfarnesyl-DMAO methyl ester by the FAD-dependent monooxygenase adrH. The terpene cyclase adrI then catalyzes the carbon skeletal rearrangement to generate the andrastin E, the first compound in the pathway having the andrastin scaffold, with the tetracyclic ring system. The post-cyclization tailoring enzymes adrF, adrE, adrJ, and adrA, are involved in the conversion of andrastin E into andrastin A. The short chain dehydrogenase adrF is responsible for the oxidation of the C-3 a hydroxyl group of andrastin E to yield the corresponding ketone, andrastin D. The ketoreductase adrE stereoselectively reduces the carbonyl moiety to reverse the stereochemistry of the C-3 position to yield andrastin F. The acetyltransferase adrJ is the acetyltransferase that attaches the acetyl group to the C-3 hydroxyl group of andrastin F to yield andrastin C. Finally, the cytochrome P450 monooxygenase adrA catalyzes two sequential oxidation reactions of the C-23 methyl group, to generate the corresponding alcohol andrastin B, and aldehyde andrastin A. The sequence is that of Ketoreductase adrE from Penicillium roqueforti.